A 173-amino-acid polypeptide reads, in one-letter code: MISYGRFNILGRELTIAIVWNNKGIQGITYSLDGIEFLEEQISRIINHLKSRNVRVNLSQEESEYPELVFMVLTGYVSNEEAFKELSLEGLTEFEIKVYSWLVKNVKRGEVITYGKVAKALKTSPLAIGGAMRRNPYPIIVPCHRVIGKRNKFLYTPKPSYKKFLLEVEGWTS.

C143 serves as the catalytic Nucleophile; methyl group acceptor.

Belongs to the MGMT family.

It is found in the cytoplasm. It catalyses the reaction a 6-O-methyl-2'-deoxyguanosine in DNA + L-cysteinyl-[protein] = S-methyl-L-cysteinyl-[protein] + a 2'-deoxyguanosine in DNA. It carries out the reaction a 4-O-methyl-thymidine in DNA + L-cysteinyl-[protein] = a thymidine in DNA + S-methyl-L-cysteinyl-[protein]. Functionally, involved in the cellular defense against the biological effects of O6-methylguanine (O6-MeG) and O4-methylthymine (O4-MeT) in DNA. Repairs the methylated nucleobase in DNA by stoichiometrically transferring the methyl group to a cysteine residue in the enzyme. This is a suicide reaction: the enzyme is irreversibly inactivated. In Pyrococcus sp. (strain NA2), this protein is Methylated-DNA--protein-cysteine methyltransferase.